The sequence spans 125 residues: Small ribosomal subunit protein bS6 (125 aa).

The tract at residues 100-125 (SPMVKAREERKPLTEVENNDFEDAEE) is disordered. Residues 104 to 113 (KAREERKPLT) show a composition bias toward basic and acidic residues. Residues 116–125 (ENNDFEDAEE) show a composition bias toward acidic residues.

Belongs to the bacterial ribosomal protein bS6 family.

Its function is as follows. Binds together with bS18 to 16S ribosomal RNA. The sequence is that of Small ribosomal subunit protein bS6 from Histophilus somni (strain 129Pt) (Haemophilus somnus).